The chain runs to 463 residues: Elongation factor 1-alpha (463 aa).

In terms of domain architecture, tr-type G spans 5 to 242 (KVHINIVVIG…DSIIPPQRPT (238 aa)). The segment at 14–21 (GHVDSGKS) is G1. 14-21 (GHVDSGKS) contributes to the GTP binding site. The interval 70–74 (GITID) is G2. Residues 91–94 (DAPG) are G3. GTP is bound by residues 91-95 (DAPGH) and 153-156 (NKMD). Positions 153–156 (NKMD) are G4. The segment at 194 to 196 (SGF) is G5. 2 positions are modified to 5-glutamyl glycerylphosphorylethanolamine: glutamate 301 and glutamate 374. The disordered stretch occupies residues 443–463 (KSDGSSGKVTKSAQKAAPKKK). Positions 446–455 (GSSGKVTKSA) are enriched in polar residues.

It belongs to the TRAFAC class translation factor GTPase superfamily. Classic translation factor GTPase family. EF-Tu/EF-1A subfamily.

It localises to the cytoplasm. This protein promotes the GTP-dependent binding of aminoacyl-tRNA to the A-site of ribosomes during protein biosynthesis. This is Elongation factor 1-alpha from Caenorhabditis elegans.